Reading from the N-terminus, the 165-residue chain is Transcription factor E (165 aa).

An HTH TFE/IIEalpha-type domain is found at 5–87 (NDPVVRGYLL…LWQLDLSDIE (83 aa)).

Belongs to the TFE family. In terms of assembly, monomer. Interaction with RNA polymerase subunits RpoF and RpoE is necessary for Tfe stimulatory transcription activity. Able to interact with Tbp and RNA polymerase in the absence of DNA promoter. Interacts both with the preinitiation and elongation complexes.

Functionally, transcription factor that plays a role in the activation of archaeal genes transcribed by RNA polymerase. Facilitates transcription initiation by enhancing TATA-box recognition by TATA-box-binding protein (Tbp), and transcription factor B (Tfb) and RNA polymerase recruitment. Not absolutely required for transcription in vitro, but particularly important in cases where Tbp or Tfb function is not optimal. It dynamically alters the nucleic acid-binding properties of RNA polymerases by stabilizing the initiation complex and destabilizing elongation complexes. Seems to translocate with the RNA polymerase following initiation and acts by binding to the non template strand of the transcription bubble in elongation complexes. In Methanococcoides burtonii (strain DSM 6242 / NBRC 107633 / OCM 468 / ACE-M), this protein is Transcription factor E.